A 340-amino-acid polypeptide reads, in one-letter code: Outer membrane protein U (340 aa).

An N-terminal signal peptide occupies residues 1 to 21 (MKKTLIALSVSAAAVATGVNA).

It belongs to the Gram-negative porin family. As to quaternary structure, homotrimer.

Its subcellular location is the cell outer membrane. Functionally, forms pores that allow passive diffusion of small molecules across the outer membrane. The sequence is that of Outer membrane protein U (ompU) from Vibrio vulnificus (strain CMCP6).